A 1196-amino-acid chain; its full sequence is [NU+] prion formation protein 1 (1196 aa).

2 disordered regions span residues methionine 1–tyrosine 49 and threonine 103–serine 125. Polar residues-rich tracts occupy residues glycine 39–tyrosine 49 and threonine 103–glutamine 113. Residues serine 114–serine 125 show a composition bias toward low complexity. Serine 443 carries the post-translational modification Phosphoserine. 2 ABC transporter domains span residues isoleucine 570–leucine 786 and alanine 812–valine 1129. ATP contacts are provided by residues glycine 604 to serine 611 and glycine 846 to serine 853. Residues arginine 942–tyrosine 1003 form the Chromo domain. 2 disordered regions span residues alanine 1137–leucine 1166 and glutamate 1177–aspartate 1196. Threonine 1191 is subject to Phosphothreonine.

It belongs to the ABC transporter superfamily. ABCF family. EF3 subfamily.

The protein resides in the cytoplasm. Its subcellular location is the nucleus. In terms of biological role, may be involved in the mRNA export process. Forms the [NU+] prion and induces [PSI+] prion formation. This is [NU+] prion formation protein 1 (NEW1) from Saccharomyces cerevisiae (strain ATCC 204508 / S288c) (Baker's yeast).